The chain runs to 460 residues: tRNA modification GTPase MnmE (460 aa).

Residues arginine 29, glutamate 91, and lysine 132 each contribute to the (6S)-5-formyl-5,6,7,8-tetrahydrofolate site. The region spanning 227–383 is the TrmE-type G domain; sequence GISIALIGKT…LIDTIIKKCG (157 aa). Asparagine 237 contributes to the K(+) binding site. GTP is bound by residues 237-242, 256-262, and 281-284; these read NVGKSS, TNIPGTT, and DTAG. Mg(2+) is bound at residue serine 241. Threonine 256, isoleucine 258, and threonine 261 together coordinate K(+). Residue threonine 262 coordinates Mg(2+). Lysine 460 contributes to the (6S)-5-formyl-5,6,7,8-tetrahydrofolate binding site.

The protein belongs to the TRAFAC class TrmE-Era-EngA-EngB-Septin-like GTPase superfamily. TrmE GTPase family. Homodimer. Heterotetramer of two MnmE and two MnmG subunits. K(+) serves as cofactor.

The protein resides in the cytoplasm. Functionally, exhibits a very high intrinsic GTPase hydrolysis rate. Involved in the addition of a carboxymethylaminomethyl (cmnm) group at the wobble position (U34) of certain tRNAs, forming tRNA-cmnm(5)s(2)U34. The protein is tRNA modification GTPase MnmE of Prochlorococcus marinus (strain MIT 9312).